Consider the following 461-residue polypeptide: Fumarate hydratase class II (461 aa).

Substrate is bound by residues 99 to 101 (SGT), 130 to 133 (HPND), 140 to 142 (STN), and Thr188. His189 acts as the Proton donor/acceptor in catalysis. The active site involves Ser319. Substrate-binding positions include Ser320 and 325 to 327 (KVN).

It belongs to the class-II fumarase/aspartase family. Fumarase subfamily. Homotetramer.

Its subcellular location is the cytoplasm. The catalysed reaction is (S)-malate = fumarate + H2O. It participates in carbohydrate metabolism; tricarboxylic acid cycle; (S)-malate from fumarate: step 1/1. In terms of biological role, involved in the TCA cycle. Catalyzes the stereospecific interconversion of fumarate to L-malate. In Prochlorococcus marinus subsp. pastoris (strain CCMP1986 / NIES-2087 / MED4), this protein is Fumarate hydratase class II.